A 465-amino-acid polypeptide reads, in one-letter code: Deoxyguanosinetriphosphate triphosphohydrolase-like protein (465 aa).

The interval 1–22 (MKWDKLLNDKRRRESGVTRSKN) is disordered. The 190-residue stretch at 63–252 (RLTHSMEVST…LEVADDIAYL (190 aa)) folds into the HD domain.

Belongs to the dGTPase family. Type 3 subfamily.

The sequence is that of Deoxyguanosinetriphosphate triphosphohydrolase-like protein from Listeria innocua serovar 6a (strain ATCC BAA-680 / CLIP 11262).